The following is a 90-amino-acid chain: Probable Fe(2+)-trafficking protein (90 aa).

Belongs to the Fe(2+)-trafficking protein family.

Could be a mediator in iron transactions between iron acquisition and iron-requiring processes, such as synthesis and/or repair of Fe-S clusters in biosynthetic enzymes. This chain is Probable Fe(2+)-trafficking protein, found in Pasteurella multocida (strain Pm70).